The following is a 203-amino-acid chain: Large ribosomal subunit protein uL13 (203 aa).

Position 2 is an N-acetylalanine (Ala2). Residue Arg59 is modified to Citrulline. Ser77 carries the phosphoserine; by ZIPK/DAPK3 modification. Arg140 carries the post-translational modification Citrulline. Lys191 is modified (N6-acetyllysine).

This sequence belongs to the universal ribosomal protein uL13 family. Component of the 60S ribosome. Component of the GAIT complex. Interacts with EIF4G1. In terms of processing, phosphorylation at Ser-77 upon interferon-gamma treatment in monocytes involves a DAPK1-DAPK3 kinase cascade and is causing release from the ribosome, association with the GAIT complex and subsequent involvement in transcript-selective translation inhibition. Citrullinated by PADI4.

The protein localises to the cytoplasm. Functionally, associated with ribosomes but is not required for canonical ribosome function and has extra-ribosomal functions. Component of the GAIT (gamma interferon-activated inhibitor of translation) complex which mediates interferon-gamma-induced transcript-selective translation inhibition in inflammation processes. Upon interferon-gamma activation and subsequent phosphorylation dissociates from the ribosome and assembles into the GAIT complex which binds to stem loop-containing GAIT elements in the 3'-UTR of diverse inflammatory mRNAs (such as ceruplasmin) and suppresses their translation. In the GAIT complex interacts with m7G cap-bound eIF4G at or near the eIF3-binding site and blocks the recruitment of the 43S ribosomal complex. Involved in methylation of rRNA. The sequence is that of Large ribosomal subunit protein uL13 (RPL13A) from Homo sapiens (Human).